The sequence spans 375 residues: Histidine biosynthesis bifunctional protein HisB (375 aa).

A histidinol-phosphatase region spans residues 1-168 (MTPIVFIDRD…GIAHTLADAP (168 aa)). The active-site Nucleophile is the D8. 3 residues coordinate Mg(2+): D8, D10, and D128. D10 acts as the Proton donor in catalysis. The imidazoleglycerol-phosphate dehydratase stretch occupies residues 169-375 (RRAVVQRHTK…HVLPSTKGAL (207 aa)).

The protein in the N-terminal section; belongs to the histidinol-phosphatase family. It in the C-terminal section; belongs to the imidazoleglycerol-phosphate dehydratase family. The cofactor is Mg(2+).

It localises to the cytoplasm. It carries out the reaction D-erythro-1-(imidazol-4-yl)glycerol 3-phosphate = 3-(imidazol-4-yl)-2-oxopropyl phosphate + H2O. It catalyses the reaction L-histidinol phosphate + H2O = L-histidinol + phosphate. It participates in amino-acid biosynthesis; L-histidine biosynthesis; L-histidine from 5-phospho-alpha-D-ribose 1-diphosphate: step 6/9. It functions in the pathway amino-acid biosynthesis; L-histidine biosynthesis; L-histidine from 5-phospho-alpha-D-ribose 1-diphosphate: step 8/9. This chain is Histidine biosynthesis bifunctional protein HisB, found in Xylella fastidiosa (strain 9a5c).